Reading from the N-terminus, the 214-residue chain is Outer-membrane lipoprotein carrier protein (214 aa).

Residues 1–23 (MNKRITVLSLLLATSLSSAAAMA) form the signal peptide.

This sequence belongs to the LolA family. As to quaternary structure, monomer.

The protein resides in the periplasm. Its function is as follows. Participates in the translocation of lipoproteins from the inner membrane to the outer membrane. Only forms a complex with a lipoprotein if the residue after the N-terminal Cys is not an aspartate (The Asp acts as a targeting signal to indicate that the lipoprotein should stay in the inner membrane). The protein is Outer-membrane lipoprotein carrier protein of Shewanella frigidimarina (strain NCIMB 400).